We begin with the raw amino-acid sequence, 465 residues long: GTPase Der (465 aa).

2 EngA-type G domains span residues Phe3–Tyr166 and Ile184–Asn358. Residues Gly9–Ser16, Asp56–Ile60, Asn118–Asp121, Gly190–Ser197, Asp237–Val241, and Asn302–Asp305 contribute to the GTP site. The KH-like domain occupies Lys359 to Glu443. A disordered region spans residues Phe446–Lys465.

This sequence belongs to the TRAFAC class TrmE-Era-EngA-EngB-Septin-like GTPase superfamily. EngA (Der) GTPase family. As to quaternary structure, associates with the 50S ribosomal subunit.

In terms of biological role, GTPase that plays an essential role in the late steps of ribosome biogenesis. The polypeptide is GTPase Der (Francisella tularensis subsp. holarctica (strain FTNF002-00 / FTA)).